Here is a 316-residue protein sequence, read N- to C-terminus: Serpentine receptor class delta-45 (316 aa).

Helical transmembrane passes span 8-28 (VFYP…IFII), 42-62 (ILLV…LIQI), 91-111 (YFLT…TIYL), 128-148 (VTFF…SLIL), 184-204 (IIIT…GLLL), 234-254 (LQVF…LVLA), and 266-286 (FFSV…LYSV).

The protein belongs to the nematode receptor-like protein srd family.

The protein localises to the membrane. This chain is Serpentine receptor class delta-45 (srd-45), found in Caenorhabditis elegans.